Here is a 176-residue protein sequence, read N- to C-terminus: Alkyl hydroperoxide reductase AhpD (176 aa).

Cys131 acts as the Proton donor in catalysis. An intrachain disulfide couples Cys131 to Cys134. The active-site Cysteine sulfenic acid (-SOH) intermediate is Cys134.

Belongs to the AhpD family.

It catalyses the reaction N(6)-[(R)-dihydrolipoyl]-L-lysyl-[lipoyl-carrier protein] + a hydroperoxide = N(6)-[(R)-lipoyl]-L-lysyl-[lipoyl-carrier protein] + an alcohol + H2O. Antioxidant protein with alkyl hydroperoxidase activity. Required for the reduction of the AhpC active site cysteine residues and for the regeneration of the AhpC enzyme activity. This Methylobacterium sp. (strain 4-46) protein is Alkyl hydroperoxide reductase AhpD.